Here is a 467-residue protein sequence, read N- to C-terminus: Argininosuccinate lyase (467 aa).

It belongs to the lyase 1 family. Argininosuccinate lyase subfamily.

Its subcellular location is the cytoplasm. The enzyme catalyses 2-(N(omega)-L-arginino)succinate = fumarate + L-arginine. The protein operates within amino-acid biosynthesis; L-arginine biosynthesis; L-arginine from L-ornithine and carbamoyl phosphate: step 3/3. The sequence is that of Argininosuccinate lyase from Rhizobium etli (strain CIAT 652).